We begin with the raw amino-acid sequence, 346 residues long: Dihydroorotase (346 aa).

2 residues coordinate Zn(2+): His17 and His19. Residues 19–21 and Asn45 each bind substrate; that span reads HLR. Residues Lys103, His140, and His178 each contribute to the Zn(2+) site. Lys103 carries the post-translational modification N6-carboxylysine. His140 is a substrate binding site. Leu223 provides a ligand contact to substrate. Asp251 contributes to the Zn(2+) binding site. Asp251 is a catalytic residue. Residues His255 and Ala267 each contribute to the substrate site.

It belongs to the metallo-dependent hydrolases superfamily. DHOase family. Class II DHOase subfamily. As to quaternary structure, homodimer. Zn(2+) serves as cofactor.

The catalysed reaction is (S)-dihydroorotate + H2O = N-carbamoyl-L-aspartate + H(+). The protein operates within pyrimidine metabolism; UMP biosynthesis via de novo pathway; (S)-dihydroorotate from bicarbonate: step 3/3. Functionally, catalyzes the reversible cyclization of carbamoyl aspartate to dihydroorotate. The sequence is that of Dihydroorotase from Synechococcus sp. (strain RCC307).